Here is an 86-residue protein sequence, read N- to C-terminus: U2-sicaritoxin-Li1b (86 aa).

Positions 1–20 (MKIELFLVVIFALAIHMATA) are cleaved as a signal peptide. Positions 21–33 (EEVIESDIEPAER) are excised as a propeptide. Intrachain disulfides connect cysteine 35–cysteine 53, cysteine 42–cysteine 62, cysteine 52–cysteine 71, and cysteine 64–cysteine 69. Position 85 is a lysine amide (lysine 85).

Belongs to the neurotoxin 39 family. Expressed by the venom gland.

Its subcellular location is the secreted. Its function is as follows. Toxin active against S.frugiperda larvae. May act on sodium channels (Nav). This chain is U2-sicaritoxin-Li1b, found in Loxosceles intermedia (Brown spider).